The primary structure comprises 376 residues: Lateral eye opsin (376 aa).

Over 1-46 (MANQLSYSSLGWPYQPNASVVDTMPKEMLYMIHEHWYAFPPMNPLW) the chain is Extracellular. A glycan (N-linked (GlcNAc...) asparagine) is linked at N17. A helical transmembrane segment spans residues 47-71 (YSILGVAMIILGIICVLGNGMVIYL). The Cytoplasmic portion of the chain corresponds to 72–83 (MMTTKSLRTPTN). The chain crosses the membrane as a helical span at residues 84–108 (LLVVNLAFSDFCMMAFMMPTMTSNC). At 109 to 123 (FAETWILGPFMCEVY) the chain is on the extracellular side. Cysteines 120 and 197 form a disulfide. Residues 124–143 (GMAGSLFGCASIWSMVMITL) form a helical membrane-spanning segment. Residues 144 to 162 (DRYNVIVRGMAAAPLTHKK) are Cytoplasmic-facing. Residues 163 to 186 (ATLLLLFVWIWSGGWTILPFFGWS) traverse the membrane as a helical segment. Residues 187 to 210 (RYVPEGNLTSCTVDYLTKDWSSAS) lie on the Extracellular side of the membrane. N-linked (GlcNAc...) asparagine glycosylation is present at N193. A helical membrane pass occupies residues 211 to 238 (YVVIYGLAVYFLPLITMIYCYFFIVHAV). Topologically, residues 239 to 274 (AEHEKQLREQAKKMNVASLRANADQQKQSAECRLAK) are cytoplasmic. A helical transmembrane segment spans residues 275–298 (VAMMTVGLWFMAWTPYLIISWAGV). The Extracellular segment spans residues 299-306 (FSSGTRLT). The helical transmembrane segment at 307–331 (PLATIWGSVFAKANSCYNPIVYGIS) threads the bilayer. K318 carries the N6-(retinylidene)lysine modification. Residues 332-376 (HPRYKAALYQRFPSLACGSGESGSDVKSEASATTTMEEKPKIPEA) lie on the Cytoplasmic side of the membrane. Residues 349–376 (GSGESGSDVKSEASATTTMEEKPKIPEA) form a disordered region. Over residues 367 to 376 (MEEKPKIPEA) the composition is skewed to basic and acidic residues.

This sequence belongs to the G-protein coupled receptor 1 family. Opsin subfamily. Phosphorylated on some or all of the serine and threonine residues present in the C-terminal region. Lateral eye.

It localises to the membrane. In terms of biological role, visual pigments are the light-absorbing molecules that mediate vision. They consist of an apoprotein, opsin, covalently linked to cis-retinal. This Limulus polyphemus (Atlantic horseshoe crab) protein is Lateral eye opsin.